The sequence spans 65 residues: Bacteriocin amylovorin-L (65 aa).

The propeptide occupies 1–15 (MKQLNSEQLQNIIGG). A helical membrane pass occupies residues 39-59 (LGGVWGAVIGGVGGAAVCGLA).

In terms of assembly, active lactobin is composed of two different peptides, one which is lactobin A.

The protein localises to the secreted. It is found in the host cell membrane. This heat stable bacteriocin inhibits the growth of closely related Lactobacillus species. It may act as a pore-forming protein, creating a channel in the cell membrane. It kills Lactobacillus helveticus ATCC 15009, but displays no activity towards Listeria species. The chain is Bacteriocin amylovorin-L (amyL) from Lactobacillus amylovorus.